The following is a 267-amino-acid chain: Large ribosomal subunit protein uL2c (267 aa).

The protein belongs to the universal ribosomal protein uL2 family. Part of the 50S ribosomal subunit.

Its subcellular location is the plastid. It localises to the apicoplast. The protein is Large ribosomal subunit protein uL2c (rpl2) of Toxoplasma gondii.